The primary structure comprises 318 residues: Transaldolase (318 aa).

Catalysis depends on Lys132, which acts as the Schiff-base intermediate with substrate.

Belongs to the transaldolase family. Type 1 subfamily. As to quaternary structure, homodimer.

Its subcellular location is the cytoplasm. It catalyses the reaction D-sedoheptulose 7-phosphate + D-glyceraldehyde 3-phosphate = D-erythrose 4-phosphate + beta-D-fructose 6-phosphate. The protein operates within carbohydrate degradation; pentose phosphate pathway; D-glyceraldehyde 3-phosphate and beta-D-fructose 6-phosphate from D-ribose 5-phosphate and D-xylulose 5-phosphate (non-oxidative stage): step 2/3. Transaldolase is important for the balance of metabolites in the pentose-phosphate pathway. This is Transaldolase from Shewanella baltica (strain OS195).